A 216-amino-acid chain; its full sequence is MQAFTQHEGLVALLDRENVDTDLIIPKQFLKSIKRAGFGPNLFDELRYLDHGEPGMDNSKRPLNSDFVLNQPRYQGASVLLARKNFGCGSSREHAPWALTQYGFRAIIAPSYADIFFNNSFKNGLLPIVLGELEVARLFDEVKAFPGFKLNIDLERQVVIAPDGRELGFDIEPFRKYCLLNGLDDIGLTLRQADKIRAFEAERLARHPWLESRPVA.

It belongs to the LeuD family. LeuD type 1 subfamily. Heterodimer of LeuC and LeuD.

The catalysed reaction is (2R,3S)-3-isopropylmalate = (2S)-2-isopropylmalate. It participates in amino-acid biosynthesis; L-leucine biosynthesis; L-leucine from 3-methyl-2-oxobutanoate: step 2/4. Functionally, catalyzes the isomerization between 2-isopropylmalate and 3-isopropylmalate, via the formation of 2-isopropylmaleate. In Bordetella pertussis (strain Tohama I / ATCC BAA-589 / NCTC 13251), this protein is 3-isopropylmalate dehydratase small subunit 2.